The primary structure comprises 425 residues: GPI mannosyltransferase 1 (425 aa).

The next 9 membrane-spanning stretches (helical) occupy residues 11-31, 85-105, 144-164, 166-186, 233-253, 295-315, 340-360, 367-387, and 398-418; these read VIGA…WQDA, FFAF…WLIA, LLGV…VSLA, VILG…PAVV, IHLT…MYIL, FESL…PLVL, SQYF…SSLM, ILVG…GYNL, and GLFL…GIIV.

This sequence belongs to the PIGM family.

Its subcellular location is the endoplasmic reticulum membrane. The protein operates within glycolipid biosynthesis; glycosylphosphatidylinositol-anchor biosynthesis. Its function is as follows. Mannosyltransferase involved in glycosylphosphatidylinositol-anchor biosynthesis. Transfers the first alpha-1,4-mannose to GlcN-acyl-PI during GPI precursor assembly. Required for cell wall integrity. The sequence is that of GPI mannosyltransferase 1 (gpi14) from Aspergillus fumigatus (strain ATCC MYA-4609 / CBS 101355 / FGSC A1100 / Af293) (Neosartorya fumigata).